The primary structure comprises 453 residues: Bifunctional protein GlmU (453 aa).

Residues 1–226 (MVAVAILAAG…YLEITGINDR (226 aa)) are pyrophosphorylase. UDP-N-acetyl-alpha-D-glucosamine-binding positions include 7–10 (LAAG), lysine 21, glutamine 73, and 78–79 (GT). Residue aspartate 103 participates in Mg(2+) binding. UDP-N-acetyl-alpha-D-glucosamine is bound by residues glycine 140, glutamate 155, asparagine 170, and asparagine 224. Asparagine 224 serves as a coordination point for Mg(2+). The tract at residues 227-247 (KQLAMANGILQNRVKDHWMAQ) is linker. Residues 248–453 (GVTLIDPDSI…EWKKTIESKK (206 aa)) form an N-acetyltransferase region. Residues arginine 329 and lysine 347 each coordinate UDP-N-acetyl-alpha-D-glucosamine. Histidine 359 acts as the Proton acceptor in catalysis. UDP-N-acetyl-alpha-D-glucosamine-binding residues include tyrosine 362 and asparagine 373. Residues alanine 376, 382–383 (NY), alanine 419, and arginine 436 contribute to the acetyl-CoA site.

This sequence in the N-terminal section; belongs to the N-acetylglucosamine-1-phosphate uridyltransferase family. It in the C-terminal section; belongs to the transferase hexapeptide repeat family. In terms of assembly, homotrimer. Requires Mg(2+) as cofactor.

The protein resides in the cytoplasm. It catalyses the reaction alpha-D-glucosamine 1-phosphate + acetyl-CoA = N-acetyl-alpha-D-glucosamine 1-phosphate + CoA + H(+). The enzyme catalyses N-acetyl-alpha-D-glucosamine 1-phosphate + UTP + H(+) = UDP-N-acetyl-alpha-D-glucosamine + diphosphate. The protein operates within nucleotide-sugar biosynthesis; UDP-N-acetyl-alpha-D-glucosamine biosynthesis; N-acetyl-alpha-D-glucosamine 1-phosphate from alpha-D-glucosamine 6-phosphate (route II): step 2/2. It participates in nucleotide-sugar biosynthesis; UDP-N-acetyl-alpha-D-glucosamine biosynthesis; UDP-N-acetyl-alpha-D-glucosamine from N-acetyl-alpha-D-glucosamine 1-phosphate: step 1/1. It functions in the pathway bacterial outer membrane biogenesis; LPS lipid A biosynthesis. Functionally, catalyzes the last two sequential reactions in the de novo biosynthetic pathway for UDP-N-acetylglucosamine (UDP-GlcNAc). The C-terminal domain catalyzes the transfer of acetyl group from acetyl coenzyme A to glucosamine-1-phosphate (GlcN-1-P) to produce N-acetylglucosamine-1-phosphate (GlcNAc-1-P), which is converted into UDP-GlcNAc by the transfer of uridine 5-monophosphate (from uridine 5-triphosphate), a reaction catalyzed by the N-terminal domain. This chain is Bifunctional protein GlmU, found in Rippkaea orientalis (strain PCC 8801 / RF-1) (Cyanothece sp. (strain PCC 8801)).